A 314-amino-acid polypeptide reads, in one-letter code: Small ribosomal subunit biogenesis GTPase RsgA (314 aa).

The CP-type G domain occupies Ser78–Phe238. GTP contacts are provided by residues Asn127 to Asp130 and Gly180 to Thr188. Zn(2+)-binding residues include Cys262, Cys267, His269, and Cys275.

Belongs to the TRAFAC class YlqF/YawG GTPase family. RsgA subfamily. In terms of assembly, monomer. Associates with 30S ribosomal subunit, binds 16S rRNA. Zn(2+) serves as cofactor.

It localises to the cytoplasm. In terms of biological role, one of several proteins that assist in the late maturation steps of the functional core of the 30S ribosomal subunit. Helps release RbfA from mature subunits. May play a role in the assembly of ribosomal proteins into the subunit. Circularly permuted GTPase that catalyzes slow GTP hydrolysis, GTPase activity is stimulated by the 30S ribosomal subunit. The polypeptide is Small ribosomal subunit biogenesis GTPase RsgA (Nitrosomonas europaea (strain ATCC 19718 / CIP 103999 / KCTC 2705 / NBRC 14298)).